A 126-amino-acid polypeptide reads, in one-letter code: Glycine cleavage system H protein (126 aa).

A Lipoyl-binding domain is found at 22 to 104 (VAYVGITDYA…YGEGWLIKMK (83 aa)). The residue at position 63 (Lys-63) is an N6-lipoyllysine.

It belongs to the GcvH family. As to quaternary structure, the glycine cleavage system is composed of four proteins: P, T, L and H. Requires (R)-lipoate as cofactor.

In terms of biological role, the glycine cleavage system catalyzes the degradation of glycine. The H protein shuttles the methylamine group of glycine from the P protein to the T protein. The protein is Glycine cleavage system H protein of Bacteroides fragilis (strain ATCC 25285 / DSM 2151 / CCUG 4856 / JCM 11019 / LMG 10263 / NCTC 9343 / Onslow / VPI 2553 / EN-2).